The following is a 192-amino-acid chain: Ribosome maturation factor RimP (192 aa).

Belongs to the RimP family.

The protein localises to the cytoplasm. In terms of biological role, required for maturation of 30S ribosomal subunits. This is Ribosome maturation factor RimP from Delftia acidovorans (strain DSM 14801 / SPH-1).